The sequence spans 129 residues: Small ribosomal subunit protein uS11 (129 aa).

Belongs to the universal ribosomal protein uS11 family. In terms of assembly, part of the 30S ribosomal subunit. Interacts with proteins S7 and S18. Binds to IF-3.

Functionally, located on the platform of the 30S subunit, it bridges several disparate RNA helices of the 16S rRNA. Forms part of the Shine-Dalgarno cleft in the 70S ribosome. In Salmonella typhi, this protein is Small ribosomal subunit protein uS11.